The primary structure comprises 419 residues: Probable pectate lyase C (419 aa).

A signal peptide spans 1–19; sequence MRLGIALFSLIGLCHSVSA. Residues asparagine 48, asparagine 164, and asparagine 201 are each glycosylated (N-linked (GlcNAc...) asparagine). Residue arginine 204 is part of the active site. An EF-hand domain is found at 261–296; that stretch reads NEYFHGYVETNYYDPDRDGTLNGNELGVSASNYGGM. Aspartate 274, aspartate 276, aspartate 278, threonine 280, and glutamate 285 together coordinate Ca(2+). The interval 350–395 is disordered; that stretch reads ELISDEASMGGPGDLDGGSPPTDSDGDGIPDDAETEIGSDPNTADS. Residues 373 to 386 are compositionally biased toward acidic residues; that stretch reads SDGDGIPDDAETEI.

Belongs to the polysaccharide lyase 1 family. Requires Ca(2+) as cofactor.

The protein localises to the secreted. The enzyme catalyses Eliminative cleavage of (1-&gt;4)-alpha-D-galacturonan to give oligosaccharides with 4-deoxy-alpha-D-galact-4-enuronosyl groups at their non-reducing ends.. Pectinolytic enzyme consist of four classes of enzymes: pectin lyase, polygalacturonase, pectin methylesterase and rhamnogalacturonase. Among pectinolytic enzymes, pectin lyase is the most important in depolymerization of pectin, since it cleaves internal glycosidic bonds of highly methylated pectins. Favors pectate, the anion, over pectin, the methyl ester. This chain is Probable pectate lyase C (plyC), found in Aspergillus terreus (strain NIH 2624 / FGSC A1156).